The chain runs to 100 residues: NADH-quinone oxidoreductase subunit K (100 aa).

The next 3 membrane-spanning stretches (helical) occupy residues 4 to 24, 28 to 48, and 60 to 80; these read LQHG…GLVI, LLFM…AFVV, and IMYI…LALL.

It belongs to the complex I subunit 4L family. As to quaternary structure, NDH-1 is composed of 13 different subunits. Subunits NuoA, H, J, K, L, M, N constitute the membrane sector of the complex.

The protein localises to the cell inner membrane. It carries out the reaction a quinone + NADH + 5 H(+)(in) = a quinol + NAD(+) + 4 H(+)(out). Its function is as follows. NDH-1 shuttles electrons from NADH, via FMN and iron-sulfur (Fe-S) centers, to quinones in the respiratory chain. The immediate electron acceptor for the enzyme in this species is believed to be ubiquinone. Couples the redox reaction to proton translocation (for every two electrons transferred, four hydrogen ions are translocated across the cytoplasmic membrane), and thus conserves the redox energy in a proton gradient. The polypeptide is NADH-quinone oxidoreductase subunit K (Cronobacter sakazakii (strain ATCC BAA-894) (Enterobacter sakazakii)).